Consider the following 78-residue polypeptide: MSNKGQLLQDPFLNALRKEHVPVSIYLVNGIKLQGNIESFDQYVVLLRNTVTQMVYKHAISTVVPARPVNFHPDSESS.

Residues 10–69 (DPFLNALRKEHVPVSIYLVNGIKLQGNIESFDQYVVLLRNTVTQMVYKHAISTVVPARPV) enclose the Sm domain.

Belongs to the Hfq family. In terms of assembly, homohexamer.

Its function is as follows. RNA chaperone that binds small regulatory RNA (sRNAs) and mRNAs to facilitate mRNA translational regulation in response to envelope stress, environmental stress and changes in metabolite concentrations. Also binds with high specificity to tRNAs. This Paraburkholderia phymatum (strain DSM 17167 / CIP 108236 / LMG 21445 / STM815) (Burkholderia phymatum) protein is RNA-binding protein Hfq.